A 402-amino-acid chain; its full sequence is MKISLFGYGKTTRAIAENLVDKFGPFDIYDDHFTETKKDTLGNLLLNPNDFDDNLSDIEIPSPGFPPKHKLIQKAKNLQSEYDFFYDIMPKSVWISGTNGKTTTTQMATHLLSHIGAVIGGNVGTPLAELDPYAKLWILETSSFTLHYTHKAKPEIYALLPISPDHLSWHGSFDNYVQDKLSVLKRMNECDVVILPKIYANTPTKAHKISYKDEKDLAVKFGIDTEKISFKSPFLLDAIMALAIEKILLDTLSYELLNSFVMEKNKLEELKDSQNRLWVNDTKATNESAVMAALNRYKDKKIHLIIGGDDKGVDLSNLFDFMKNFNIELYAIGISTEKMLDYAKKANLKAYKCEVLSKAVNEISNHLRVNEVALLSPACASLDQFNSYVERGKVFKECVNKI.

Residue 97–103 coordinates ATP; that stretch reads GTNGKTT.

It belongs to the MurCDEF family.

It is found in the cytoplasm. The enzyme catalyses UDP-N-acetyl-alpha-D-muramoyl-L-alanine + D-glutamate + ATP = UDP-N-acetyl-alpha-D-muramoyl-L-alanyl-D-glutamate + ADP + phosphate + H(+). Its pathway is cell wall biogenesis; peptidoglycan biosynthesis. Functionally, cell wall formation. Catalyzes the addition of glutamate to the nucleotide precursor UDP-N-acetylmuramoyl-L-alanine (UMA). This Campylobacter jejuni subsp. jejuni serotype O:6 (strain 81116 / NCTC 11828) protein is UDP-N-acetylmuramoylalanine--D-glutamate ligase.